We begin with the raw amino-acid sequence, 69 residues long: Large ribosomal subunit protein eL38z/eL38y (69 aa).

Belongs to the eukaryotic ribosomal protein eL38 family.

This Arabidopsis thaliana (Mouse-ear cress) protein is Large ribosomal subunit protein eL38z/eL38y (RPL38A).